The chain runs to 1231 residues: ATP-dependent RNA helicase DHX30 (1231 aa).

The interval 39–65 (PDGLEGARQEDEEEQPPPPGAEEQSTA) is disordered. DRBM domains follow at residues 80-148 (PKNL…CQLF) and 292-359 (PKNL…CQKL). The Helicase ATP-binding domain occupies 488–656 (LSAIEQNPVV…FGGCPVVKVP (169 aa)). 501–508 (GDTGCGKT) contributes to the ATP binding site. Positions 603–606 (DEVH) match the DEAH box motif. One can recognise a Helicase C-terminal domain in the interval 697–870 (LITDLVLQID…NLVVQAKIHM (174 aa)).

It belongs to the DEAD box helicase family. DEAH subfamily.

The protein resides in the cytoplasm. The protein localises to the mitochondrion. Its subcellular location is the mitochondrion matrix. It is found in the mitochondrion nucleoid. The catalysed reaction is ATP + H2O = ADP + phosphate + H(+). Functionally, RNA-dependent helicase. Plays an important role in the assembly of the mitochondrial large ribosomal subunit. Required for optimal function of the zinc-finger antiviral protein ZC3HAV1. Associates with mitochondrial DNA. Involved in nervous system development and differentiation through its involvement in the up-regulation of a number of genes which are required for neurogenesis, including GSC, NCAM1, neurogenin, and NEUROD. In Gallus gallus (Chicken), this protein is ATP-dependent RNA helicase DHX30 (DHX30).